Here is a 109-residue protein sequence, read N- to C-terminus: Nucleoid-associated protein CKO_02678 (109 aa).

Residues 89–109 (KEKMASVSSGMQLPPGFKMPF) form a disordered region.

The protein belongs to the YbaB/EbfC family. In terms of assembly, homodimer.

The protein localises to the cytoplasm. It is found in the nucleoid. Its function is as follows. Binds to DNA and alters its conformation. May be involved in regulation of gene expression, nucleoid organization and DNA protection. The sequence is that of Nucleoid-associated protein CKO_02678 from Citrobacter koseri (strain ATCC BAA-895 / CDC 4225-83 / SGSC4696).